A 233-amino-acid polypeptide reads, in one-letter code: 5'-methylthioadenosine/S-adenosylhomocysteine nucleosidase (233 aa).

E12 acts as the Proton acceptor in catalysis. Substrate is bound by residues G78, I156, and M177–E178. D201 serves as the catalytic Proton donor.

It belongs to the PNP/UDP phosphorylase family. MtnN subfamily.

The enzyme catalyses S-adenosyl-L-homocysteine + H2O = S-(5-deoxy-D-ribos-5-yl)-L-homocysteine + adenine. It carries out the reaction S-methyl-5'-thioadenosine + H2O = 5-(methylsulfanyl)-D-ribose + adenine. It catalyses the reaction 5'-deoxyadenosine + H2O = 5-deoxy-D-ribose + adenine. Its pathway is amino-acid biosynthesis; L-methionine biosynthesis via salvage pathway; S-methyl-5-thio-alpha-D-ribose 1-phosphate from S-methyl-5'-thioadenosine (hydrolase route): step 1/2. Functionally, catalyzes the irreversible cleavage of the glycosidic bond in both 5'-methylthioadenosine (MTA) and S-adenosylhomocysteine (SAH/AdoHcy) to adenine and the corresponding thioribose, 5'-methylthioribose and S-ribosylhomocysteine, respectively. Also cleaves 5'-deoxyadenosine, a toxic by-product of radical S-adenosylmethionine (SAM) enzymes, into 5-deoxyribose and adenine. The polypeptide is 5'-methylthioadenosine/S-adenosylhomocysteine nucleosidase (Listeria monocytogenes serotype 4b (strain CLIP80459)).